An 87-amino-acid polypeptide reads, in one-letter code: MAGSENKARTMQGVVVSNGMDKSVVVMTNRYIKHPKYKKFVRKSTKVMAHDADNACGVGDRVTISECTPFSKRKTWSLVSIDEKAAL.

Belongs to the universal ribosomal protein uS17 family. Part of the 30S ribosomal subunit.

In terms of biological role, one of the primary rRNA binding proteins, it binds specifically to the 5'-end of 16S ribosomal RNA. This chain is Small ribosomal subunit protein uS17, found in Hydrogenovibrio crunogenus (strain DSM 25203 / XCL-2) (Thiomicrospira crunogena).